We begin with the raw amino-acid sequence, 271 residues long: Regulatory protein RecX (271 aa).

The protein belongs to the RecX family.

The protein localises to the cytoplasm. Modulates RecA activity. The protein is Regulatory protein RecX of Geobacillus sp. (strain WCH70).